Reading from the N-terminus, the 536-residue chain is Membrane protein insertase YidC (536 aa).

The next 5 membrane-spanning stretches (helical) occupy residues 3–23 (LQRNFFILIFFFISFLLWKTW), 346–366 (ICGNWGVSIILITFIIKGITF), 417–437 (GGCFPLFIQMPIFLALYYMLI), 454–474 (LSDQDPFYVLPILMGVTMFFI), and 494–514 (IPILFTVFFLWFPSGLVLYYL).

It belongs to the OXA1/ALB3/YidC family. Type 1 subfamily. Interacts with the Sec translocase complex via SecD. Specifically interacts with transmembrane segments of nascent integral membrane proteins during membrane integration.

It localises to the cell membrane. Functionally, required for the insertion and/or proper folding and/or complex formation of integral membrane proteins into the membrane. Involved in integration of membrane proteins that insert both dependently and independently of the Sec translocase complex, as well as at least some lipoproteins. Aids folding of multispanning membrane proteins. The sequence is that of Membrane protein insertase YidC from Buchnera aphidicola subsp. Baizongia pistaciae (strain Bp).